Here is a 198-residue protein sequence, read N- to C-terminus: Linker for activation of T-cells family member 2 (198 aa).

The Extracellular segment spans residues Met-1 to Pro-4. A helical; Signal-anchor for type III membrane protein membrane pass occupies residues Glu-5 to Val-24. S-palmitoyl cysteine attachment occurs at residues Cys-23 and Cys-26. Over Arg-25–Lys-198 the chain is Cytoplasmic. Residues Tyr-136, Tyr-155, and Tyr-184 each carry the phosphotyrosine modification.

In terms of assembly, when phosphorylated, interacts with GRB2. Phosphorylated on tyrosines following cross-linking of BCR; which induces the recruitment of GRB2.

Its subcellular location is the cell membrane. Functionally, involved in BCR (B-cell antigen receptor)-mediated signaling in B-cells. May also be involved in FCER1 (high affinity immunoglobulin epsilon receptor)-mediated signaling in mast cells and FCGR1 (high affinity immunoglobulin gamma Fc receptor I)-mediated signaling in myeloid cells. Couples activation of these receptors and their associated kinases with distal intracellular events such as calcium mobilization through the recruitment of GRB2. The protein is Linker for activation of T-cells family member 2 (LAT2) of Gallus gallus (Chicken).